Reading from the N-terminus, the 288-residue chain is Acetyl-coenzyme A carboxylase carboxyl transferase subunit beta (288 aa).

In terms of domain architecture, CoA carboxyltransferase N-terminal spans 34 to 288 (LFAKCPGCKQ…TLLSFHGGVQ (255 aa)). Positions 38, 41, 56, and 59 each coordinate Zn(2+). The C4-type zinc-finger motif lies at 38–59 (CPGCKQAIYQKDLGQAKICPNC).

Belongs to the AccD/PCCB family. In terms of assembly, acetyl-CoA carboxylase is a heterohexamer composed of biotin carboxyl carrier protein (AccB), biotin carboxylase (AccC) and two subunits each of ACCase subunit alpha (AccA) and ACCase subunit beta (AccD). Requires Zn(2+) as cofactor.

The protein resides in the cytoplasm. The catalysed reaction is N(6)-carboxybiotinyl-L-lysyl-[protein] + acetyl-CoA = N(6)-biotinyl-L-lysyl-[protein] + malonyl-CoA. Its pathway is lipid metabolism; malonyl-CoA biosynthesis; malonyl-CoA from acetyl-CoA: step 1/1. Functionally, component of the acetyl coenzyme A carboxylase (ACC) complex. Biotin carboxylase (BC) catalyzes the carboxylation of biotin on its carrier protein (BCCP) and then the CO(2) group is transferred by the transcarboxylase to acetyl-CoA to form malonyl-CoA. This Streptococcus thermophilus (strain CNRZ 1066) protein is Acetyl-coenzyme A carboxylase carboxyl transferase subunit beta.